We begin with the raw amino-acid sequence, 287 residues long: Lycopene elongase/hydratase (287 aa).

Transmembrane regions (helical) follow at residues 15-35, 37-57, 87-107, 137-157, 166-186, 218-238, and 265-285; these read ISWINTAYPFGLAYLLNAGEI, WLFWLGIVFFLIPYNIAMYGI, TLLWASAISTIPFLVILFIFG, FIDALTSSTHFTSPALIGATI, MWIALGSFFLWGMASQILGAV, LLAAVLVTTLPNPAWIIGIAI, and VFLWLNYFVGAVITILLIAIH.

Belongs to the UbiA prenyltransferase family.

The protein localises to the cell membrane. The enzyme catalyses all-trans-lycopene + dimethylallyl diphosphate + A + H2O = nonaflavuxanthin + AH2 + diphosphate. It catalyses the reaction nonaflavuxanthin + dimethylallyl diphosphate + A + H2O = flavuxanthin + AH2 + diphosphate. It functions in the pathway carotenoid biosynthesis. In terms of biological role, catalyzes the elongation of the C(40) carotenoid all-trans-lycopene to the acyclic C(50) carotenoid flavuxanthin during decaprenoxanthin biosynthesis. Acts as a bifunctional enzyme that catalyzes the elongation of lycopene by attaching a C(5) isoprene unit at C-2, as well as the hydroxylation of the new isoprene unit. The enzyme acts at both ends of the substrate, forming the C(50) carotenoid flavuxanthin via the C(45) intermediate nonaflavuxanthin. The protein is Lycopene elongase/hydratase of Corynebacterium glutamicum (strain ATCC 13032 / DSM 20300 / JCM 1318 / BCRC 11384 / CCUG 27702 / LMG 3730 / NBRC 12168 / NCIMB 10025 / NRRL B-2784 / 534).